The sequence spans 324 residues: MKTLEEVAKALKNTYMEHEVDEKLPLIQEIQRLKKEKNAILLGHNYMTPDVFHGVSDITGDSLYLSKVAADTDADVILFNGVHFMAETAKLMSPQKKVLIADLKAGCSLAESITRQDVIDLKQKYPGVPVVTYVNCTADVKAETDICCTSANALQVVESLESDTVIFLPDRYLAANVQNLTQKKIITHPGSCMVHEMYSAEDIELTRRQFPGVTVISHPECKTEVVDRSDYSGSTSQMSDFIRKSEAKNIFLITECSMGDNLRSEFPDRHFVSTCQVCPHMKKITLEKIRDSLLYDQYEIHLDPEVIEKGRMSVQRMLDLSFKK.

Iminosuccinate-binding residues include histidine 44 and serine 62. Residue cysteine 107 coordinates [4Fe-4S] cluster. Residues 133–135 (YVN) and serine 150 contribute to the iminosuccinate site. [4Fe-4S] cluster is bound at residue cysteine 192. Residues 218–220 (HPE) and threonine 235 contribute to the iminosuccinate site. Residue cysteine 278 coordinates [4Fe-4S] cluster.

This sequence belongs to the quinolinate synthase family. Type 2 subfamily. [4Fe-4S] cluster is required as a cofactor.

Its subcellular location is the cytoplasm. It carries out the reaction iminosuccinate + dihydroxyacetone phosphate = quinolinate + phosphate + 2 H2O + H(+). Its pathway is cofactor biosynthesis; NAD(+) biosynthesis; quinolinate from iminoaspartate: step 1/1. Its function is as follows. Catalyzes the condensation of iminoaspartate with dihydroxyacetone phosphate to form quinolinate. This is Quinolinate synthase from Leptospira interrogans serogroup Icterohaemorrhagiae serovar copenhageni (strain Fiocruz L1-130).